A 486-amino-acid chain; its full sequence is MGTNDLDIEEGTLEIGMEYRTVSGVAGPLVILDKVKGPKYQEIVNIRLGDGSTRRGQVLEVDGEKAVVQVFEGTSGIDNKFTTVQFTGEVLKTPVSLDMLGRIFNGSGKPIDNGPPILPEAYLDISGSSINPSERTYPEEMIQTGISTIDVMNSIARGQKIPLFSAAGLPHNEIAAQICRQAGLVKRLEKTVDLLEDHGEDNFAIVFAAMGVNMETAQFFKRDFEENGSMERVTLFLNLANDPTIERIITPRIALTTAEYLAYECGKHVLVILTDMSSYADALREVSAAREEVPGRRGYPGYMYTDLATIYERAGRIEGRKGSITQIPILTMPNDDITHPTPDLTGYITEGQIYIDRQLHNRQIYPPINVLPSLSRLMKSAIGEGMTRKDHSDVSNQLYANYAIGKDVQAMKAVVGEEALSSEDLLYLEFLDKFERKFVMQGAYDTRNIFQSLDLAWTLLRIFPRELLHRIPAKTLDQFYSRDSTS.

The residue at position 2 (glycine 2) is an N-acetylglycine.

This sequence belongs to the ATPase alpha/beta chains family. As to quaternary structure, V-ATPase is a heteromultimeric enzyme composed of a peripheral catalytic V1 complex (components A to H) attached to an integral membrane V0 proton pore complex (components: a, c, c'', d and e).

It localises to the vacuole membrane. Functionally, non-catalytic subunit of the peripheral V1 complex of vacuolar ATPase. V-ATPase is responsible for acidifying a variety of intracellular compartments in eukaryotic cells. This is V-type proton ATPase subunit B1 (VHA-B1) from Arabidopsis thaliana (Mouse-ear cress).